The following is a 226-amino-acid chain: MDTTPAAPDASFDLDPAEIRVLGVLVEKAFLTPDAYPLSVNALVAGCNQLTAREPVMALSEGEVQAAIDSLLARRLVSRRDQAGGRVAKYEHQLRLRHSLPPAEQAVLALLMLRGPQTPGELRSRSERMHRFDDIAAVEAVLEHLGEKYPPMAAALPRAPGTKEIRHMHLLGGAEALEAAAEGLASAAAGGTGRGRLAELEEEVQRLRSEVAELRAAFDTFRQQFD.

This sequence belongs to the UPF0502 family.

This Azoarcus sp. (strain BH72) protein is UPF0502 protein azo0627.